The chain runs to 173 residues: Ribosome maturation factor RimM (173 aa).

In terms of domain architecture, PRC barrel spans proline 95–leucine 169.

Belongs to the RimM family. As to quaternary structure, binds ribosomal protein uS19.

It localises to the cytoplasm. An accessory protein needed during the final step in the assembly of 30S ribosomal subunit, possibly for assembly of the head region. Essential for efficient processing of 16S rRNA. May be needed both before and after RbfA during the maturation of 16S rRNA. It has affinity for free ribosomal 30S subunits but not for 70S ribosomes. This Mycolicibacterium smegmatis (strain ATCC 700084 / mc(2)155) (Mycobacterium smegmatis) protein is Ribosome maturation factor RimM.